We begin with the raw amino-acid sequence, 365 residues long: MTQRTKTRPVKVGNLTIGGNNELIIQSMTTTKTHDVEATVAEIKRLEEAGCQVVRVAVPDERAANAIADIKKQINIPLVADIHFDYRLALKAIEGGIDKVRINPGNIGRRHKVEAVVNAAKERGIPIRIGVNAGSLERHILEKYGYPTADGMVESALHHIKILEDLDFHDIIVSMKASDVNLAIEAYEKAARAFDYPLHLGITESGTLFAGTVKSAAGLGAILSKGIGNTLRISLSADPVEEVKVARELLKSFGLASNAATLISCPTCGRIEIDLISIANEVEEYISTLKVPIKVAVLGCAVNGPGEAREADIGIAGARGEGLLFRKGQVVRKVPEETMVEELKKEIDVIAAEMAAEREKEKQEQ.

Residues C265, C268, C300, and E307 each coordinate [4Fe-4S] cluster.

Belongs to the IspG family. The cofactor is [4Fe-4S] cluster.

It carries out the reaction (2E)-4-hydroxy-3-methylbut-2-enyl diphosphate + oxidized [flavodoxin] + H2O + 2 H(+) = 2-C-methyl-D-erythritol 2,4-cyclic diphosphate + reduced [flavodoxin]. It functions in the pathway isoprenoid biosynthesis; isopentenyl diphosphate biosynthesis via DXP pathway; isopentenyl diphosphate from 1-deoxy-D-xylulose 5-phosphate: step 5/6. Functionally, converts 2C-methyl-D-erythritol 2,4-cyclodiphosphate (ME-2,4cPP) into 1-hydroxy-2-methyl-2-(E)-butenyl 4-diphosphate. The sequence is that of 4-hydroxy-3-methylbut-2-en-1-yl diphosphate synthase (flavodoxin) from Bacillus mycoides (strain KBAB4) (Bacillus weihenstephanensis).